We begin with the raw amino-acid sequence, 443 residues long: Regulator of sigma E protease (443 aa).

H21 serves as a coordination point for Zn(2+). E22 is a catalytic residue. Position 25 (H25) interacts with Zn(2+). A helical transmembrane segment spans residues 98–118 (FVIIAGPLANFIFAIFAYWVI). PDZ domains are found at residues 106 to 185 (ANFI…SPFN) and 198 to 287 (NWTF…TPVR). Helical transmembrane passes span 369–389 (LVYFLSFMALISVNLGIMNLF) and 423–443 (IGAALLLSLTVFALFNDFLRL).

It belongs to the peptidase M50B family. In terms of assembly, interacts with RseA. Zn(2+) serves as cofactor.

It localises to the cell inner membrane. Its function is as follows. A site-2 regulated intramembrane protease (S2P) that cleaves a peptide bond in the transmembrane region of RseA. Part of a regulated intramembrane proteolysis (RIP) cascade. Acts on DegS-cleaved RseA to release the cytoplasmic domain of RseA. This provides the cell with sigma-E (RpoE) activity through the proteolysis of RseA. The protein is Regulator of sigma E protease (rsep) of Haemophilus influenzae (strain ATCC 51907 / DSM 11121 / KW20 / Rd).